The sequence spans 893 residues: UPF0182 protein CLD_0809 (893 aa).

Transmembrane regions (helical) follow at residues 9–29, 49–69, 94–114, 154–174, 202–222, 246–266, and 273–293; these read IPLF…NFII, AIII…WMYY, LFFI…SSSY, VIIS…FILE, LAIV…IKIW, FYKI…LSIV, and VSIC…ASFL.

It belongs to the UPF0182 family.

It is found in the cell membrane. The chain is UPF0182 protein CLD_0809 from Clostridium botulinum (strain Okra / Type B1).